We begin with the raw amino-acid sequence, 195 residues long: Small t antigen (195 aa).

N-acetylmethionine; by host is present on methionine 1. One can recognise a J domain in the interval 12–75 (RLLELLKLPR…VYNLRMNLGG (64 aa)).

Interacts with host PPP2R1A; the interaction inhibits PP2A activity.

It is found in the host cytoplasm. It localises to the host nucleus. In terms of biological role, promotes efficient viral genome replication by accelerating both G1 and S phase progression of the cell cycle. Inhibits host PP2A by binding to the A subunit, thereby displacing lower affinity regulatory B subunit. Inactivation of PP2A in turn results in the transactivation of cyclin A and cyclin D1 promoters. Late during the infection cycle, ST may induce dephosphorylation of host MTOR, leading to the inhibition of cap-dependent translation. May establish and maintain high levels of viral genomes during persistent infection in cell culture. The sequence is that of Small t antigen from Mus musculus (Mouse).